The following is a 74-amino-acid chain: Cytochrome c oxidase assembly factor 5 (74 aa).

The 39-residue stretch at 27-65 folds into the CHCH domain; the sequence is QSDCVVQEGKSPRQCLKEGYCNSLKYAFFECKRSVLDNR. A Cx10C motif motif is present at residues 30 to 41; the sequence is CVVQEGKSPRQC. 2 disulfide bridges follow: C30–C57 and C41–C47. Position 37 is a phosphoserine (S37). The Cx9C motif motif lies at 47-57; the sequence is CNSLKYAFFEC.

The protein belongs to the PET191 family.

Functionally, involved in an early step of the mitochondrial complex IV assembly process. This is Cytochrome c oxidase assembly factor 5 (COA5) from Homo sapiens (Human).